A 190-amino-acid chain; its full sequence is ATP synthase subunit b (190 aa).

A helical transmembrane segment spans residues 4–24; that stretch reads ILAPVLSLVLIAGVASPALAA.

This sequence belongs to the ATPase B chain family. In terms of assembly, F-type ATPases have 2 components, F(1) - the catalytic core - and F(0) - the membrane proton channel. F(1) has five subunits: alpha(3), beta(3), gamma(1), delta(1), epsilon(1). F(0) has three main subunits: a(1), b(2) and c(10-14). The alpha and beta chains form an alternating ring which encloses part of the gamma chain. F(1) is attached to F(0) by a central stalk formed by the gamma and epsilon chains, while a peripheral stalk is formed by the delta and b chains.

It is found in the cell inner membrane. Functionally, f(1)F(0) ATP synthase produces ATP from ADP in the presence of a proton or sodium gradient. F-type ATPases consist of two structural domains, F(1) containing the extramembraneous catalytic core and F(0) containing the membrane proton channel, linked together by a central stalk and a peripheral stalk. During catalysis, ATP synthesis in the catalytic domain of F(1) is coupled via a rotary mechanism of the central stalk subunits to proton translocation. Component of the F(0) channel, it forms part of the peripheral stalk, linking F(1) to F(0). This Ruegeria pomeroyi (strain ATCC 700808 / DSM 15171 / DSS-3) (Silicibacter pomeroyi) protein is ATP synthase subunit b.